A 350-amino-acid chain; its full sequence is Cobalt-precorrin-5B C(1)-methyltransferase (350 aa).

Belongs to the CbiD family.

It carries out the reaction Co-precorrin-5B + S-adenosyl-L-methionine = Co-precorrin-6A + S-adenosyl-L-homocysteine. It functions in the pathway cofactor biosynthesis; adenosylcobalamin biosynthesis; cob(II)yrinate a,c-diamide from sirohydrochlorin (anaerobic route): step 6/10. In terms of biological role, catalyzes the methylation of C-1 in cobalt-precorrin-5B to form cobalt-precorrin-6A. The polypeptide is Cobalt-precorrin-5B C(1)-methyltransferase (Sulfurisphaera tokodaii (strain DSM 16993 / JCM 10545 / NBRC 100140 / 7) (Sulfolobus tokodaii)).